A 260-amino-acid polypeptide reads, in one-letter code: Sodium channel modifier 1 (260 aa).

The Bipartite nuclear localization signal signature appears at 4 to 20 (KRDGDDSSQLNVLKKRR). The Matrin-type zinc finger occupies 42–74 (YACTVCHHRPVFNTIDMLSVHRTGKKHLGGLQR). The interval 143–260 (RNVYDPHSGP…EEEPPALPPS (118 aa)) is disordered. Over residues 166-187 (PGPSQPHTSLHSPPTGPCSSPT) the composition is skewed to polar residues. Over residues 202 to 221 (KGEEKFRKEIADPERERNME) the composition is skewed to basic and acidic residues. Acidic residues predominate over residues 245 to 254 (VEFDSDEEEP).

Component of the minor spliceosome, which splices U12-type introns.

The protein localises to the nucleus. It localises to the nucleoplasm. The protein resides in the nucleus speckle. In terms of biological role, as a component of the minor spliceosome, involved in the splicing of U12-type introns in pre-mRNAs. The polypeptide is Sodium channel modifier 1 (scnm1) (Xenopus laevis (African clawed frog)).